A 458-amino-acid polypeptide reads, in one-letter code: MKALDGLRESLYPSLDFQLYQDDQVCSADASQPLADSVGAHDLAWSERMCPLPLAPAKSPLLACPESPDLCLCALQKTPLGRAPQDLGEDASNMRHQPPSLYKASTDSEKLTIKDSLNREEMGNEPERGAYPHLPPRTSSFPDAGLDRKSLSPLTFWPWLPPTLISKEPPIHIYPIFPGYPLLPLPYLFTYGALPSAQHPYLFMLPPHSTYPTVAGPSLLMTASGSGPRIPQEKTLLLHSGAFQSAGHTLHSQVESRSSRDTRTPGQAGVAAPTRRAVPGSRAGVIALPYPLKKENGKILYECNVCGKNFGQLSNLKVHLRVHSGERPFQCALCQKRFTQLAHLQKHHLVHTGERPHQCQVCHKRFSSSSNLKTHLRLHSGAKPSQCGLCPSYLTPNVYPKLHHRLRAPQLRGLTHTHLPLASLTCLAQWHQGALDLVEKKMGWTVDKVSSESKGKQG.

2 disordered regions span residues 84–109 (PQDL…TDSE) and 249–275 (TLHS…APTR). 3 C2H2-type zinc fingers span residues 301–323 (YECN…LRVH), 329–351 (FQCA…HLVH), and 357–379 (HQCQ…LRLH).

The protein belongs to the krueppel C2H2-type zinc-finger protein family. Expressed in tissue-resident memory T (Trm) cell population in non-lymphoid organs, such as skin and gut. Expressed in innate lymphocytes, including tissue-resident natural killer (trNK) and natural killer T (NKT) cells in thymus, spleen and liver.

Its subcellular location is the nucleus. Transcription factor that mediates a transcriptional program in various innate and adaptive immune tissue-resident lymphocyte T-cell types such as tissue-resident memory T (Trm), natural killer (trNK) and natural killer T (NKT) cells and negatively regulates gene expression of proteins that promote the egress of tissue-resident T-cell populations from non-lymphoid organs. Plays a role in the development, retention and long-term establishment of adaptive and innate tissue-resident lymphocyte T-cell types in non-lymphoid organs, such as the skin and gut, but also in other nonbarrier tissues like liver and kidney, and therefore may provide immediate immunological protection against reactivating infections or viral reinfection. Also plays a role in the differentiation of both thymic and peripheral NKT cells. Negatively regulates the accumulation of interferon-gamma (IFN-gamma) in NKT cells at steady state or after antigenic stimulation. Positively regulates granzyme B production in NKT cells after innate stimulation. Associates with the transcriptional repressor PRDM1/BLIMP1 to chromatin at gene promoter regions. The chain is Tissue-resident T-cell transcription regulator protein ZNF683 from Mus musculus (Mouse).